The chain runs to 336 residues: Casein kinase II subunit alpha (336 aa).

A Protein kinase domain is found at 37–322 (YQLVRKLGRG…AREAMAHPYF (286 aa)). Residues 43–51 (LGRGKYSEV) and Lys66 each bind ATP. Residue Asp154 is the Proton acceptor of the active site.

The protein belongs to the protein kinase superfamily. Ser/Thr protein kinase family. CK2 subfamily. In terms of assembly, tetramer of two alpha and two beta chains. Mg(2+) serves as cofactor.

The protein localises to the nucleus. The protein resides in the nucleolus. It carries out the reaction L-seryl-[protein] + ATP = O-phospho-L-seryl-[protein] + ADP + H(+). The catalysed reaction is L-threonyl-[protein] + ATP = O-phospho-L-threonyl-[protein] + ADP + H(+). In terms of biological role, casein kinases are operationally defined by their preferential utilization of acidic proteins such as caseins as substrates. The alpha chain contains the catalytic site. May participate in Wnt signaling. The polypeptide is Casein kinase II subunit alpha (CkIIalpha) (Drosophila melanogaster (Fruit fly)).